We begin with the raw amino-acid sequence, 255 residues long: Protein BEAN1 (255 aa).

A helical transmembrane segment spans residues 37 to 57; that stretch reads VLVASAVIGVVITLSCITIIV. Basic residues predominate over residues 69–90; sequence QRHHHRHRRHHHHHRHRRRRHR. 2 disordered regions span residues 69–109 and 160–255; these read QRHH…MPYA and DAPP…ERIV. Positions 193-206 are enriched in polar residues; sequence QRTQGQSRLHTVSM. The span at 217-226 shows a compositional bias: low complexity; it reads GTGSPSDLLP. Positions 234–243 are enriched in polar residues; the sequence is PSNSQGSPIP. Pro residues predominate over residues 244–255; the sequence is TQAPMPSPERIV.

Interacts with NEDD4.

It localises to the membrane. This chain is Protein BEAN1 (Bean1), found in Mus musculus (Mouse).